A 38-amino-acid polypeptide reads, in one-letter code: Photosystem II reaction center protein L (38 aa).

A helical transmembrane segment spans residues 17–37 (SLYWGLLLIFVLAVLFSNYSF).

This sequence belongs to the PsbL family. PSII is composed of 1 copy each of membrane proteins PsbA, PsbB, PsbC, PsbD, PsbE, PsbF, PsbH, PsbI, PsbJ, PsbK, PsbL, PsbM, PsbT, PsbX, PsbY, PsbZ, Psb30/Ycf12, at least 3 peripheral proteins of the oxygen-evolving complex and a large number of cofactors. It forms dimeric complexes.

Its subcellular location is the plastid. The protein localises to the chloroplast thylakoid membrane. In terms of biological role, one of the components of the core complex of photosystem II (PSII). PSII is a light-driven water:plastoquinone oxidoreductase that uses light energy to abstract electrons from H(2)O, generating O(2) and a proton gradient subsequently used for ATP formation. It consists of a core antenna complex that captures photons, and an electron transfer chain that converts photonic excitation into a charge separation. This subunit is found at the monomer-monomer interface and is required for correct PSII assembly and/or dimerization. The protein is Photosystem II reaction center protein L of Bowenia serrulata (Byfield fern).